The sequence spans 262 residues: Linker for activation of T-cells family member 1 (262 aa).

Topologically, residues 1 to 4 (MEEA) are extracellular. Residues 5–27 (ILVPCVLGLLLLPILAMLMALCV) traverse the membrane as a helical; Signal-anchor for type III membrane protein segment. S-palmitoyl cysteine attachment occurs at residues Cys26 and Cys29. Residues 28–262 (HCHRLPGSYD…PDYENLQELN (235 aa)) lie on the Cytoplasmic side of the membrane. Position 39 is a phosphothreonine (Thr39). Phosphoserine occurs at positions 40, 41, 43, 84, 101, 106, and 109. Residues 69-115 (SYPPLSQPDLLPIPRSPQPLGGSHRTPSSRRDSDGANSVASYENEGA) are disordered. 5 positions are modified to phosphotyrosine: Tyr110, Tyr156, Tyr161, Tyr200, and Tyr220. An interaction with PLCG1 region spans residues 161–164 (YLVV). Interaction with GRB2, GRAP2 and PIK3R1 stretches follow at residues 200 to 203 (YVNV) and 220 to 223 (YVNV). The disordered stretch occupies residues 206 to 262 (SGESAEASLDGSREYVNVSQELHPGAAKTEPAALSSQEAEEVEEEGAPDYENLQELN). Phosphoserine occurs at positions 224, 240, and 241. Acidic residues predominate over residues 243 to 253 (EAEEVEEEGAP). Phosphotyrosine is present on Tyr255.

As to quaternary structure, when phosphorylated, interacts directly with the PIK3R1 subunit of phosphoinositide 3-kinase and the SH2 domains of GRB2, GRAP, GRAP2, PLCG1 and PLCG2. Interacts indirectly with CBL, SOS, VAV, and LCP2. Interacts with SHB, SKAP2 and CLNK. Interacts with FCGR1A. Interacts with GRB2, PLCG1 and THEMIS upon TCR activation in thymocytes. Interacts with THEMIS2. In terms of assembly, (Microbial infection) Interacts with herpes virus 1/HHV-1 protein US3; this interaction prevents the interaction between LAT and TRAF6. Phosphorylated on tyrosines by ZAP70 upon TCR activation, or by SYK upon other immunoreceptor activation; which leads to the recruitment of multiple signaling molecules. Is one of the most prominently tyrosine-phosphorylated proteins detected following TCR engagement. May be dephosphorylated by PTPRJ. Phosphorylated by ITK leading to the recruitment of VAV1 to LAT-containing complexes. In terms of processing, palmitoylation of Cys-26 and Cys-29 is required for raft targeting and efficient phosphorylation. Post-translationally, 'Lys-63'-linked ubiquitinated by TRAF6. As to expression, expressed in thymus, T-cells, NK cells, mast cells and, at lower levels, in spleen. Present in T-cells but not B-cells (at protein level).

It localises to the cell membrane. In terms of biological role, required for TCR (T-cell antigen receptor)- and pre-TCR-mediated signaling, both in mature T-cells and during their development. Involved in FCGR3 (low affinity immunoglobulin gamma Fc region receptor III)-mediated signaling in natural killer cells and FCER1 (high affinity immunoglobulin epsilon receptor)-mediated signaling in mast cells. Couples activation of these receptors and their associated kinases with distal intracellular events such as mobilization of intracellular calcium stores, PKC activation, MAPK activation or cytoskeletal reorganization through the recruitment of PLCG1, GRB2, GRAP2, and other signaling molecules. The polypeptide is Linker for activation of T-cells family member 1 (LAT) (Homo sapiens (Human)).